The sequence spans 296 residues: Putative gluconeogenesis factor (296 aa).

It belongs to the gluconeogenesis factor family.

The protein localises to the cytoplasm. Functionally, required for morphogenesis under gluconeogenic growth conditions. This chain is Putative gluconeogenesis factor, found in Vibrio cholerae serotype O1 (strain ATCC 39315 / El Tor Inaba N16961).